A 296-amino-acid chain; its full sequence is MNNQSNCAPIFNRETHWPSPAKLNLFLYITGQRPNGYHELQTLFQFLDYGDTLTITATNTSAITINPAIEGVTTEDNLIYRAADALRQATGTMLGAHIEIDKILPMGGGLGGGSSNAATTLVALNYLWQTQLDLDKLADIGLALGADVPVFVKGFSAFAEGVGEKLLPATPQEKWFLVTKPNVSIATVDIFTHPDLIRNTEKRSLKALLAGVYENDCEKIVRRLHPEVDKAVSWLLEYAPSRLTGTGACVFAEFSSQQEADAILKKLPDWLHGFVAKGVNTSPLMATLHVHSTDCQ.

Lysine 22 is a catalytic residue. 105 to 115 (PMGGGLGGGSS) provides a ligand contact to ATP. Aspartate 147 is an active-site residue.

This sequence belongs to the GHMP kinase family. IspE subfamily.

It catalyses the reaction 4-CDP-2-C-methyl-D-erythritol + ATP = 4-CDP-2-C-methyl-D-erythritol 2-phosphate + ADP + H(+). The protein operates within isoprenoid biosynthesis; isopentenyl diphosphate biosynthesis via DXP pathway; isopentenyl diphosphate from 1-deoxy-D-xylulose 5-phosphate: step 3/6. Catalyzes the phosphorylation of the position 2 hydroxy group of 4-diphosphocytidyl-2C-methyl-D-erythritol. This chain is 4-diphosphocytidyl-2-C-methyl-D-erythritol kinase, found in Photobacterium profundum (strain SS9).